The following is an 88-amino-acid chain: MNITDVRVRKIAKEGKMRAVVSITIDDEFVVHDIKVIEGEKGLFIAMPSRKSSDGEYRDIAHPINTQTRDKLQKIVLEAYEKAEYVEE.

The protein belongs to the SpoVG family.

Functionally, could be involved in septation. The sequence is that of Putative septation protein SpoVG from Lachnospira eligens (strain ATCC 27750 / DSM 3376 / VPI C15-48 / C15-B4) (Eubacterium eligens).